Consider the following 111-residue polypeptide: Nucleoid-associated protein SynRCC307_0025 (111 aa).

The protein belongs to the YbaB/EbfC family. In terms of assembly, homodimer.

Its subcellular location is the cytoplasm. It localises to the nucleoid. Its function is as follows. Binds to DNA and alters its conformation. May be involved in regulation of gene expression, nucleoid organization and DNA protection. The sequence is that of Nucleoid-associated protein SynRCC307_0025 from Synechococcus sp. (strain RCC307).